Reading from the N-terminus, the 83-residue chain is Small ribosomal subunit protein bS16 (83 aa).

This sequence belongs to the bacterial ribosomal protein bS16 family.

This chain is Small ribosomal subunit protein bS16, found in Polaromonas sp. (strain JS666 / ATCC BAA-500).